The following is a 231-amino-acid chain: Adenosylcobinamide-GDP ribazoletransferase (231 aa).

A run of 5 helical transmembrane segments spans residues 28–48, 97–117, 121–141, 162–182, and 209–229; these read LWLF…PHFI, TGAG…TLLY, FWEI…LMLL, VFIG…ESLA, and VIGS…TIAG.

This sequence belongs to the CobS family. It depends on Mg(2+) as a cofactor.

It localises to the cell membrane. The catalysed reaction is alpha-ribazole + adenosylcob(III)inamide-GDP = adenosylcob(III)alamin + GMP + H(+). The enzyme catalyses alpha-ribazole 5'-phosphate + adenosylcob(III)inamide-GDP = adenosylcob(III)alamin 5'-phosphate + GMP + H(+). Its pathway is cofactor biosynthesis; adenosylcobalamin biosynthesis; adenosylcobalamin from cob(II)yrinate a,c-diamide: step 7/7. Its function is as follows. Joins adenosylcobinamide-GDP and alpha-ribazole to generate adenosylcobalamin (Ado-cobalamin). Also synthesizes adenosylcobalamin 5'-phosphate from adenosylcobinamide-GDP and alpha-ribazole 5'-phosphate. In Archaeoglobus fulgidus (strain ATCC 49558 / DSM 4304 / JCM 9628 / NBRC 100126 / VC-16), this protein is Adenosylcobinamide-GDP ribazoletransferase (cobS2).